The sequence spans 87 residues: Small ribosomal subunit protein uS17 (87 aa).

It belongs to the universal ribosomal protein uS17 family. As to quaternary structure, part of the 30S ribosomal subunit.

One of the primary rRNA binding proteins, it binds specifically to the 5'-end of 16S ribosomal RNA. The sequence is that of Small ribosomal subunit protein uS17 from Endomicrobium trichonymphae.